Here is a 97-residue protein sequence, read N- to C-terminus: YcgL domain-containing protein PSPTO_3921 (97 aa).

The YcgL domain maps to 3–87 (RICSIYRSPK…AEDEYIEHLP (85 aa)).

This is YcgL domain-containing protein PSPTO_3921 from Pseudomonas syringae pv. tomato (strain ATCC BAA-871 / DC3000).